Here is a 393-residue protein sequence, read N- to C-terminus: Formate-dependent phosphoribosylglycinamide formyltransferase (393 aa).

Residues 22 to 23 and Glu82 contribute to the N(1)-(5-phospho-beta-D-ribosyl)glycinamide site; that span reads EL. Residues Arg114, Lys155, 160-165, 195-198, and Glu203 each bind ATP; these read SSGKGQ and EGFI. The region spanning 119–308 is the ATP-grasp domain; sequence RLAAEELGLP…EFALHARAIL (190 aa). Mg(2+) is bound by residues Glu267 and Glu279. N(1)-(5-phospho-beta-D-ribosyl)glycinamide is bound by residues Asp286, Lys356, and 363-364; that span reads RR.

It belongs to the PurK/PurT family. As to quaternary structure, homodimer.

The enzyme catalyses N(1)-(5-phospho-beta-D-ribosyl)glycinamide + formate + ATP = N(2)-formyl-N(1)-(5-phospho-beta-D-ribosyl)glycinamide + ADP + phosphate + H(+). It functions in the pathway purine metabolism; IMP biosynthesis via de novo pathway; N(2)-formyl-N(1)-(5-phospho-D-ribosyl)glycinamide from N(1)-(5-phospho-D-ribosyl)glycinamide (formate route): step 1/1. Its function is as follows. Involved in the de novo purine biosynthesis. Catalyzes the transfer of formate to 5-phospho-ribosyl-glycinamide (GAR), producing 5-phospho-ribosyl-N-formylglycinamide (FGAR). Formate is provided by PurU via hydrolysis of 10-formyl-tetrahydrofolate. This chain is Formate-dependent phosphoribosylglycinamide formyltransferase, found in Pseudomonas aeruginosa (strain LESB58).